A 155-amino-acid chain; its full sequence is MDYEIRQEQKRKIAGFHMVGPWEHTVKQGFEQLMTWVDRQRIVPVEWIAVYYDNPDVVPAEKLRCDTVVSVAENFILPDNSEGVIVTAIEGGEYATAVARVEDRDFAKPWERFFDVLEQDSAYQIASAPCFETYLNNGMEDGYWDIEMYIPVQRK.

Belongs to the DNA gyrase inhibitor family. Interacts with DNA gyrase.

The protein resides in the cytoplasm. Functionally, inhibits the supercoiling activity of DNA gyrase. Acts by inhibiting DNA gyrase at an early step, prior to (or at the step of) binding of DNA by the gyrase. It protects cells against toxins that target DNA gyrase, by inhibiting activity of these toxins and reducing the formation of lethal double-strand breaks in the cell. The polypeptide is DNA gyrase inhibitor (Salmonella typhi).